We begin with the raw amino-acid sequence, 596 residues long: Arginine--tRNA ligase (596 aa).

Residues 128-138 (ANPTSSLHVGH) carry the 'HIGH' region motif.

This sequence belongs to the class-I aminoacyl-tRNA synthetase family. In terms of assembly, monomer.

It localises to the cytoplasm. The catalysed reaction is tRNA(Arg) + L-arginine + ATP = L-arginyl-tRNA(Arg) + AMP + diphosphate. In Acinetobacter baumannii (strain SDF), this protein is Arginine--tRNA ligase.